The primary structure comprises 907 residues: Sensor protein GacS (907 aa).

Transmembrane regions (helical) follow at residues 9–25 (ASLM…WMQL), 84–101 (VLAH…IGSG), and 159–178 (LFAS…TLAV). The 53-residue stretch at 182 to 234 (RTINGPMSQIKQAVSQLKDGNLETRLPPLGSRELDELASGINRMAATLQNAQE) folds into the HAMP domain. One can recognise a Histidine kinase domain in the interval 281–502 (NMSHEIRTPL…EFWISLKLPK (222 aa)). Histidine 284 carries the phosphohistidine; by autocatalysis modification. Residues 658–777 (RVLCVDDNPA…QLAQVVLKWT (120 aa)) enclose the Response regulatory domain. A 4-aspartylphosphate modification is found at aspartate 707. Positions 814-907 (KADLAADMLA…RLEAEARVMA (94 aa)) constitute an HPt domain. At histidine 853 the chain carries Phosphohistidine.

In terms of processing, activation requires a sequential transfer of a phosphate group from a His in the primary transmitter domain, to an Asp in the receiver domain and to a His in the secondary transmitter domain.

Its subcellular location is the cell inner membrane. It carries out the reaction ATP + protein L-histidine = ADP + protein N-phospho-L-histidine.. In terms of biological role, forms part of a two-component regulatory system GacA/GacS(LemA). May be involved in lesion formation, swarming and in the production of extracellular protease, syringomycin and N-acyl-L-homoserine lactone (acyl-HSL). Required for pathogenicity on bean. This is Sensor protein GacS (gacS) from Pseudomonas syringae pv. syringae.